Reading from the N-terminus, the 109-residue chain is Thioredoxin (109 aa).

The region spanning 2–109 (ETLLWKDARE…LVEKIKELFK (108 aa)) is the Thioredoxin domain. C27 and C30 are oxidised to a cystine.

It belongs to the thioredoxin family.

In terms of biological role, participates in various redox reactions through the reversible oxidation of its active center dithiol to a disulfide and catalyzes dithiol-disulfide exchange reactions. The protein is Thioredoxin (trxA) of Mycoplasmopsis pulmonis (strain UAB CTIP) (Mycoplasma pulmonis).